The sequence spans 520 residues: MSLSILIAIALFIGVFTYYLWIWSFWMRKGIKGPRGLPFFGIINAFQSYEKPWILRLGDWTKEYGPMYGFTDGVEKTLVVSDPEFVHEVFVKQFDNFYARKQNPLQGDPDKDPRIHLVTSQGHRWKRLRTLASPTFSNKSLRKIFSTVEESVAEMMRHLEKGTAGGKTIDILEYYQEFTMDIIGKIAMGQSGSMMFENPWLDKIRAIFNTRGNIIFIICGIVPFTGSIFRWFFSKVPTAQTVTSLMHTLEIALTKRVEQRAADEKAGIESSGEPQDFIDLFLDVQADTDFLEDETKNGFARSQIVKVDKHLTFDEIIGQLFVFLLAGYDTTALSLSYSSYLLARHPEIQKKLQEEVDRECPDPEVTFDQLSKLKYMECVIKETLRLYPLASIVHNRKCMKSTTVLGMKIEEGTNVQADTWTLHYDPKFWGENANEFKPERWESGDEQAVAKGAYLPFGLGPRICIGMRLAYMEEKMLLAQILKKYSLETTFETHIPLKLVGIATTAPTNVHLKLKPRHSD.

Cys464 provides a ligand contact to heme.

The protein belongs to the cytochrome P450 family. Requires heme as cofactor.

Functionally, cytochromes P450 are a group of heme-thiolate monooxygenases. They oxidize a variety of structurally unrelated compounds, including steroids, fatty acids, and xenobiotics. This Caenorhabditis elegans protein is Putative cytochrome P450 CYP13A3 (cyp-13A3).